The following is a 386-amino-acid chain: 8-amino-7-oxononanoate synthase (386 aa).

Arg-23 contacts substrate. 110-111 serves as a coordination point for pyridoxal 5'-phosphate; sequence GY. Residue His-135 participates in substrate binding. Pyridoxal 5'-phosphate is bound by residues Ser-181, His-209, and Thr-236. Lys-239 is subject to N6-(pyridoxal phosphate)lysine. A substrate-binding site is contributed by Thr-354.

This sequence belongs to the class-II pyridoxal-phosphate-dependent aminotransferase family. BioF subfamily. In terms of assembly, homodimer. Pyridoxal 5'-phosphate serves as cofactor.

The catalysed reaction is 6-carboxyhexanoyl-[ACP] + L-alanine + H(+) = (8S)-8-amino-7-oxononanoate + holo-[ACP] + CO2. It functions in the pathway cofactor biosynthesis; biotin biosynthesis. Catalyzes the decarboxylative condensation of pimeloyl-[acyl-carrier protein] and L-alanine to produce 8-amino-7-oxononanoate (AON), [acyl-carrier protein], and carbon dioxide. The sequence is that of 8-amino-7-oxononanoate synthase from Thiobacillus denitrificans (strain ATCC 25259 / T1).